We begin with the raw amino-acid sequence, 157 residues long: Crossover junction endodeoxyribonuclease RuvC (157 aa).

Active-site residues include Asp7, Glu67, and Asp139. Residues Asp7, Glu67, and Asp139 each coordinate Mg(2+).

It belongs to the RuvC family. As to quaternary structure, homodimer which binds Holliday junction (HJ) DNA. The HJ becomes 2-fold symmetrical on binding to RuvC with unstacked arms; it has a different conformation from HJ DNA in complex with RuvA. In the full resolvosome a probable DNA-RuvA(4)-RuvB(12)-RuvC(2) complex forms which resolves the HJ. Requires Mg(2+) as cofactor.

The protein localises to the cytoplasm. It carries out the reaction Endonucleolytic cleavage at a junction such as a reciprocal single-stranded crossover between two homologous DNA duplexes (Holliday junction).. Functionally, the RuvA-RuvB-RuvC complex processes Holliday junction (HJ) DNA during genetic recombination and DNA repair. Endonuclease that resolves HJ intermediates. Cleaves cruciform DNA by making single-stranded nicks across the HJ at symmetrical positions within the homologous arms, yielding a 5'-phosphate and a 3'-hydroxyl group; requires a central core of homology in the junction. The consensus cleavage sequence is 5'-(A/T)TT(C/G)-3'. Cleavage occurs on the 3'-side of the TT dinucleotide at the point of strand exchange. HJ branch migration catalyzed by RuvA-RuvB allows RuvC to scan DNA until it finds its consensus sequence, where it cleaves and resolves the cruciform DNA. This Prochlorococcus marinus (strain MIT 9312) protein is Crossover junction endodeoxyribonuclease RuvC.